The primary structure comprises 267 residues: 22 kDa alpha-zein 14 (267 aa).

The N-terminal stretch at 1-21 (MATKILSLLALLALFASATNA) is a signal peptide.

Belongs to the zein family.

Functionally, zeins are major seed storage proteins. The chain is 22 kDa alpha-zein 14 from Zea mays (Maize).